Consider the following 130-residue polypeptide: Small ribosomal subunit protein uS11 (130 aa).

Belongs to the universal ribosomal protein uS11 family. As to quaternary structure, part of the 30S ribosomal subunit. Interacts with proteins S7 and S18. Binds to IF-3.

Functionally, located on the platform of the 30S subunit, it bridges several disparate RNA helices of the 16S rRNA. Forms part of the Shine-Dalgarno cleft in the 70S ribosome. This Thermotoga petrophila (strain ATCC BAA-488 / DSM 13995 / JCM 10881 / RKU-1) protein is Small ribosomal subunit protein uS11.